The sequence spans 261 residues: 1-(5-phosphoribosyl)-5-[(5-phosphoribosylamino)methylideneamino] imidazole-4-carboxamide isomerase (261 aa).

Residue Asp-8 is the Proton acceptor of the active site. Residue Asp-139 is the Proton donor of the active site.

This sequence belongs to the HisA/HisF family.

It is found in the cytoplasm. The catalysed reaction is 1-(5-phospho-beta-D-ribosyl)-5-[(5-phospho-beta-D-ribosylamino)methylideneamino]imidazole-4-carboxamide = 5-[(5-phospho-1-deoxy-D-ribulos-1-ylimino)methylamino]-1-(5-phospho-beta-D-ribosyl)imidazole-4-carboxamide. It functions in the pathway amino-acid biosynthesis; L-histidine biosynthesis; L-histidine from 5-phospho-alpha-D-ribose 1-diphosphate: step 4/9. This is 1-(5-phosphoribosyl)-5-[(5-phosphoribosylamino)methylideneamino] imidazole-4-carboxamide isomerase from Janthinobacterium sp. (strain Marseille) (Minibacterium massiliensis).